The following is a 316-amino-acid chain: Mitochondrial distribution and morphology protein 12 (316 aa).

In terms of domain architecture, SMP-LTD spans methionine 1–glycine 312.

The protein belongs to the MDM12 family. Component of the ER-mitochondria encounter structure (ERMES) or MDM complex, composed of MMM1, MDM10, MDM12 and MDM34. An MMM1 homodimer associates with one molecule of MDM12 on each side in a pairwise head-to-tail manner, and the SMP-LTD domains of MMM1 and MDM12 generate a continuous hydrophobic tunnel for phospholipid trafficking.

The protein localises to the mitochondrion outer membrane. Its subcellular location is the endoplasmic reticulum membrane. Its function is as follows. Component of the ERMES/MDM complex, which serves as a molecular tether to connect the endoplasmic reticulum (ER) and mitochondria. Components of this complex are involved in the control of mitochondrial shape and protein biogenesis, and function in nonvesicular lipid trafficking between the ER and mitochondria. MDM12 is required for the interaction of the ER-resident membrane protein MMM1 and the outer mitochondrial membrane-resident beta-barrel protein MDM10. The MDM12-MMM1 subcomplex functions in the major beta-barrel assembly pathway that is responsible for biogenesis of all mitochondrial outer membrane beta-barrel proteins, and acts in a late step after the SAM complex. The MDM10-MDM12-MMM1 subcomplex further acts in the TOM40-specific pathway after the action of the MDM12-MMM1 complex. Essential for establishing and maintaining the structure of mitochondria and maintenance of mtDNA nucleoids. The sequence is that of Mitochondrial distribution and morphology protein 12 from Postia placenta (strain ATCC 44394 / Madison 698-R) (Brown rot fungus).